A 304-amino-acid chain; its full sequence is UDP-3-O-acyl-N-acetylglucosamine deacetylase (304 aa).

Zn(2+) is bound by residues His-79, His-238, and Asp-242. The Proton donor role is filled by His-265.

The protein belongs to the LpxC family. The cofactor is Zn(2+).

It carries out the reaction a UDP-3-O-[(3R)-3-hydroxyacyl]-N-acetyl-alpha-D-glucosamine + H2O = a UDP-3-O-[(3R)-3-hydroxyacyl]-alpha-D-glucosamine + acetate. The protein operates within glycolipid biosynthesis; lipid IV(A) biosynthesis; lipid IV(A) from (3R)-3-hydroxytetradecanoyl-[acyl-carrier-protein] and UDP-N-acetyl-alpha-D-glucosamine: step 2/6. Functionally, catalyzes the hydrolysis of UDP-3-O-myristoyl-N-acetylglucosamine to form UDP-3-O-myristoylglucosamine and acetate, the committed step in lipid A biosynthesis. The chain is UDP-3-O-acyl-N-acetylglucosamine deacetylase from Laribacter hongkongensis (strain HLHK9).